Consider the following 25-residue polypeptide: Cruzioseptin-13 (25 aa).

Asn25 is subject to Asparagine amide.

In terms of tissue distribution, expressed by the skin glands.

It is found in the secreted. Has antimicrobial activity. The polypeptide is Cruzioseptin-13 (Cruziohyla calcarifer (Splendid leaf frog)).